Reading from the N-terminus, the 496-residue chain is Maintenance of mitochondrial morphology protein 1 (496 aa).

Over 1-22 the chain is Lumenal; it reads MSSQLNDPTPIPAQSSLSFTQG. Residues 23–43 form a helical membrane-spanning segment; sequence FLLGQLSVVLLIAAFIKFFIF. Topologically, residues 44-496 are cytoplasmic; sequence GEAPPPPSRG…SLPGGGVTTT (453 aa). 4 disordered regions span residues 50 to 96, 276 to 331, 395 to 433, and 449 to 496; these read PSRG…VPSS, PLDT…KSNV, GRTG…SREP, and DLAS…VTTT. A compositionally biased stretch (basic residues) spans 54-64; the sequence is LSHRSATHRRS. Positions 65–74 are enriched in polar residues; sequence NSIYSSTQHD. Basic and acidic residues predominate over residues 75–84; sequence GNTRTLREKP. Positions 85-96 are enriched in polar residues; it reads SNSNVLRPVPSS. The 258-residue stretch at 131 to 388 folds into the SMP-LTD domain; sequence QPESLDWFNV…EPRVQVVGLP (258 aa). The segment covering 276-287 has biased composition (pro residues); the sequence is PLDTPSHSPSPP. Residues 407-418 show a composition bias toward polar residues; it reads TGSNAPRSSTAA. 2 stretches are compositionally biased toward basic and acidic residues: residues 424 to 433 and 462 to 474; these read AHHEDSSREP and GDLR…REES.

It belongs to the MMM1 family. Homodimer. Component of the ER-mitochondria encounter structure (ERMES) or MDM complex, composed of mmm1, mdm10, mdm12 and mdm34. A mmm1 homodimer associates with one molecule of mdm12 on each side in a pairwise head-to-tail manner, and the SMP-LTD domains of mmm1 and mdm12 generate a continuous hydrophobic tunnel for phospholipid trafficking.

The protein localises to the endoplasmic reticulum membrane. Component of the ERMES/MDM complex, which serves as a molecular tether to connect the endoplasmic reticulum (ER) and mitochondria. Components of this complex are involved in the control of mitochondrial shape and protein biogenesis, and function in nonvesicular lipid trafficking between the ER and mitochondria. The mdm12-mmm1 subcomplex functions in the major beta-barrel assembly pathway that is responsible for biogenesis of all outer membrane beta-barrel proteins, and acts in a late step after the SAM complex. The mdm10-mdm12-mmm1 subcomplex further acts in the TOM40-specific pathway after the action of the mdm12-mmm1 complex. Essential for establishing and maintaining the structure of mitochondria and maintenance of mtDNA nucleoids. The chain is Maintenance of mitochondrial morphology protein 1 from Neosartorya fischeri (strain ATCC 1020 / DSM 3700 / CBS 544.65 / FGSC A1164 / JCM 1740 / NRRL 181 / WB 181) (Aspergillus fischerianus).